The primary structure comprises 114 residues: Fumarate reductase subunit D (114 aa).

3 helical membrane-spanning segments follow: residues 24–44 (VSAI…PFGL), 50–70 (LITF…TIFP), and 92–112 (GGFI…FAVI).

This sequence belongs to the FrdD family. As to quaternary structure, part of an enzyme complex containing four subunits: a flavoprotein (FrdA), an iron-sulfur protein (FrdB), and two hydrophobic anchor proteins (FrdC and FrdD).

The protein localises to the cell inner membrane. In terms of biological role, anchors the catalytic components of the fumarate reductase complex to the cell membrane, binds quinones. The protein is Fumarate reductase subunit D of Haemophilus influenzae (strain PittGG).